The sequence spans 335 residues: UPF0353 protein MT1528 (335 aa).

2 consecutive transmembrane segments (helical) span residues 18-38 and 67-87; these read WFFLFLFVVAGLVALYILMQL and VPAILLVLSLLLFTIAMAGPT. The VWFA domain occupies 98 to 294; the sequence is VVMLVIDVSQ…AELRAVYSSL (197 aa). A helical transmembrane segment spans residues 309–329; sequence VGWLRLGALALALAALAALLI.

The protein belongs to the UPF0353 family.

The protein resides in the cell membrane. This is UPF0353 protein MT1528 from Mycobacterium tuberculosis (strain CDC 1551 / Oshkosh).